A 155-amino-acid chain; its full sequence is Small ribosomal subunit protein uS7cz/uS7cy (155 aa).

The protein belongs to the universal ribosomal protein uS7 family. In terms of assembly, part of the 30S ribosomal subunit.

It is found in the plastid. Its subcellular location is the chloroplast. Functionally, one of the primary rRNA binding proteins, it binds directly to 16S rRNA where it nucleates assembly of the head domain of the 30S subunit. The chain is Small ribosomal subunit protein uS7cz/uS7cy (rps7-A) from Vitis vinifera (Grape).